A 314-amino-acid polypeptide reads, in one-letter code: 2,3-dihydroxyphenylpropionate/2,3-dihydroxicinnamic acid 1,2-dioxygenase 1 (314 aa).

Catalysis depends on histidine 115, which acts as the Proton donor. Residue histidine 179 is the Proton acceptor of the active site.

It belongs to the LigB/MhpB extradiol dioxygenase family. Homotetramer. It depends on Fe(2+) as a cofactor.

The catalysed reaction is 3-(2,3-dihydroxyphenyl)propanoate + O2 = (2Z,4E)-2-hydroxy-6-oxonona-2,4-dienedioate + H(+). It catalyses the reaction (2E)-3-(2,3-dihydroxyphenyl)prop-2-enoate + O2 = (2Z,4E,7E)-2-hydroxy-6-oxonona-2,4,7-trienedioate + H(+). The protein operates within aromatic compound metabolism; 3-phenylpropanoate degradation. In terms of biological role, catalyzes the non-heme iron(II)-dependent oxidative cleavage of 2,3-dihydroxyphenylpropionic acid and 2,3-dihydroxicinnamic acid into 2-hydroxy-6-ketononadienedioate and 2-hydroxy-6-ketononatrienedioate, respectively. The polypeptide is 2,3-dihydroxyphenylpropionate/2,3-dihydroxicinnamic acid 1,2-dioxygenase 1 (Pseudomonas putida (Arthrobacter siderocapsulatus)).